Reading from the N-terminus, the 221-residue chain is Ribosomal RNA large subunit methyltransferase E (221 aa).

The S-adenosyl-L-methionine site is built by Gly-60, Trp-62, Asp-89, Asp-105, and Asp-134. The active-site Proton acceptor is Lys-174.

Belongs to the class I-like SAM-binding methyltransferase superfamily. RNA methyltransferase RlmE family.

Its subcellular location is the cytoplasm. It carries out the reaction uridine(2552) in 23S rRNA + S-adenosyl-L-methionine = 2'-O-methyluridine(2552) in 23S rRNA + S-adenosyl-L-homocysteine + H(+). Specifically methylates the uridine in position 2552 of 23S rRNA at the 2'-O position of the ribose in the fully assembled 50S ribosomal subunit. This chain is Ribosomal RNA large subunit methyltransferase E, found in Cupriavidus metallidurans (strain ATCC 43123 / DSM 2839 / NBRC 102507 / CH34) (Ralstonia metallidurans).